A 232-amino-acid chain; its full sequence is Putative dimethylsulfoniopropionate lyase DddL (232 aa).

A divalent metal cation contacts are provided by His154, Glu159, Tyr161, and His190.

The protein belongs to the non-heme iron-dependent dioxygenase family. As to quaternary structure, homodimer. It depends on a divalent metal cation as a cofactor.

It catalyses the reaction S,S-dimethyl-beta-propiothetin = acrylate + dimethyl sulfide + H(+). Its function is as follows. May cleave dimethylsulfoniopropionate (DMSP), releasing dimethyl sulfide (DMS). DMS is the principal form by which sulfur is transported from oceans to the atmosphere. The real activity of the protein is however subject to debate and it is unclear whether it constitutes a real dimethylsulfoniopropionate lyase in vivo. The polypeptide is Putative dimethylsulfoniopropionate lyase DddL (dddL) (Cereibacter sphaeroides (strain ATCC 17023 / DSM 158 / JCM 6121 / CCUG 31486 / LMG 2827 / NBRC 12203 / NCIMB 8253 / ATH 2.4.1.) (Rhodobacter sphaeroides)).